Consider the following 452-residue polypeptide: GPI mannosyltransferase 2 (452 aa).

Topologically, residues 1–7 (MMEKVTK) are cytoplasmic. A helical membrane pass occupies residues 8–28 (LALTSRVMVLVVQLLANFATP). The Lumenal segment spans residues 29–113 (DHKPDVFRMP…HLGIPLSRDA (85 aa)). A helical transmembrane segment spans residues 114–134 (LILLVAVALNVLIFCKTANVL). Over 135 to 161 (YKLTQRMFNDHNKSWNAALIFCFNPAS) the chain is Cytoplasmic. A helical transmembrane segment spans residues 162–182 (IFFSAAYSETFFAFASFSLML). Over 183-209 (ECMRSEKDFRTFRLGAALTGCFVCRSN) the chain is Lumenal. A helical membrane pass occupies residues 210–230 (GLLTLGFPLYFLARHILLSTG). The Cytoplasmic segment spans residues 231–238 (SVQRCWQL). The chain crosses the membrane as a helical span at residues 239 to 259 (FKMGLAMLVALGILHTYYFYI). At 260–284 (YRLYCLPDVKVQHAQHVVDYAKERS) the chain is on the lumenal side. Residues 285 to 305 (FLISGQASVGSPWCGYTLPFP) traverse the membrane as a helical segment. Residues 306-327 (YTYVQSHYWDVGFLRYYKWKQL) lie on the Cytoplasmic side of the membrane. A helical transmembrane segment spans residues 328–348 (PNFLLALPMLLFMHWHCYDYI). Residues 349 to 370 (RKLVANTWSKISPSEYQGILKE) are Lumenal-facing. A helical membrane pass occupies residues 371–391 (HISFPFVLHAAVLTLVCTLYV). The Cytoplasmic portion of the chain corresponds to 392-398 (HIQVSTR). A helical membrane pass occupies residues 399-419 (LLASATPVFYWFAADYMPNTF). At 420–426 (QLSFRSK) the chain is on the lumenal side. Residues 427–447 (AGVLFIWCLTYSLVGTVLFSN) form a helical membrane-spanning segment. At 448–452 (NYPWT) the chain is on the cytoplasmic side.

The protein belongs to the PIGV family.

It localises to the endoplasmic reticulum membrane. Its pathway is glycolipid biosynthesis; glycosylphosphatidylinositol-anchor biosynthesis. Its function is as follows. Mannosyltransferase involved in glycosylphosphatidylinositol-anchor biosynthesis. Transfers the second mannose to the glycosylphosphatidylinositol during GPI precursor assembly. Required for the GPI-mediated endoplasmic reticulum exit and proper targeting to the cell surface of chp. Required for GPI-mediated membrane attachment of chp, qsm and Cont. Essential for microvillar stability in the rhabdomere. The polypeptide is GPI mannosyltransferase 2 (Drosophila pseudoobscura pseudoobscura (Fruit fly)).